Here is a 151-residue protein sequence, read N- to C-terminus: 3-hydroxyacyl-[acyl-carrier-protein] dehydratase FabZ (151 aa).

Residue His-49 is part of the active site.

It belongs to the thioester dehydratase family. FabZ subfamily.

The protein resides in the cytoplasm. It catalyses the reaction a (3R)-hydroxyacyl-[ACP] = a (2E)-enoyl-[ACP] + H2O. In terms of biological role, involved in unsaturated fatty acids biosynthesis. Catalyzes the dehydration of short chain beta-hydroxyacyl-ACPs and long chain saturated and unsaturated beta-hydroxyacyl-ACPs. In Bordetella bronchiseptica (strain ATCC BAA-588 / NCTC 13252 / RB50) (Alcaligenes bronchisepticus), this protein is 3-hydroxyacyl-[acyl-carrier-protein] dehydratase FabZ.